Reading from the N-terminus, the 283-residue chain is MFS-type transporter eupM (283 aa).

7 helical membrane passes run 68–88, 111–131, 136–156, 165–185, 196–216, 227–247, and 263–283; these read LVAW…WGAM, IAWI…VAGP, GGFK…YMML, VLLA…TPMI, IGLA…VYPI, FAWT…IPII, and LIDL…ATMI.

The protein belongs to the major facilitator superfamily. Monocarboxylate porter (TC 2.A.1.13) family.

It is found in the membrane. Functionally, MFS-type transporter; part of the gene cluster that mediates the biosynthesis of eupenifeldin, a bistropolone meroterpenoid that acts as an antitumor agent. In Phoma sp, this protein is MFS-type transporter eupM.